The following is a 741-amino-acid chain: MTASTRNGSPSPSPAAPTAAEQESKSMTTTPANPPETKSQTNGKGSGTAQSSQKPASTSANAKDPLRPRRKKAKRACFACQRAHLTCGDERPCQRCIKRGLQDACHDGVRKKAKYLHDAPNEALLPGIRGNYYNQANTTRNIPNQRGNASNSNSNKVSRQSVSSANFYTPQAARSYNVYVQAKSQQSHVRPAVMQDASMNPSVFHAQSPSSTQNFDLSSNPQTQNLSSAMSQTASSVSGQNQDPFGAAFFDPSHPALFNFDIASMNFGNRYGALEFGMLGHMATGAGDTPPSDSATQRGSIGRSSGTFTAQNFGDSANNQSPFLFGDPVLNDWNPTGQGQANPRNIYNQNAVAGQMGEQNPHAFAIESAPMNFASPSSTESPQMTTTTPFDEANANFSSRTNLMHPTNTPQQSRISTPGLKHQGLHVGVKRRYRSPSSIYESVKEPYSYTSGFHSLTAFIQRRFSPQKTLQIAKALASIRPSFIATTKTLNQDDLIFMEKCFQRTLWEYEDFINACGTPTIVCRRTGEIAAVGKEFSILTGWKKEVLLGKEPNLNVNTGSSLSSASSVRGSSTFTPRNNNTHNSIDPHTGMPTVGGGGASGRTQPVFLAELLDDDSVIEFYEDFAKLAFGDSRGSVMTTCKLLKYKTKEDSAALFHGKEETQQGGVDGSSGTGTTTSGDVATTTATGTSTSNGANANTNGNNTNPNDPSTAASSSASSGCRARSNHLGKRGGRGALPAKRG.

A disordered region spans residues Met1–Arg70. Polar residues predominate over residues Lys25–Asn61. The segment at residues Cys77–Cys105 is a DNA-binding region (zn(2)-C6 fungal-type). Disordered stretches follow at residues Gln135–Ser163, Ser202–Gly239, Gly285–Ser321, Thr401–Lys421, Gly559–Gly590, and Phe655–Gly741. Residues Ser202–Leu226 are compositionally biased toward polar residues. Residues Ser227–Ser238 are compositionally biased toward low complexity. 2 stretches are compositionally biased toward polar residues: residues Pro291 to Ser321 and Thr401 to Ser416. Low complexity predominate over residues Ser560–Ser572. Residues Thr573 to Asp586 show a composition bias toward polar residues. Positions Thr672–Ser718 are enriched in low complexity. Over residues Arg723–Gly732 the composition is skewed to basic residues.

It belongs to the ERT1/acuK family.

It localises to the nucleus. Its function is as follows. Transcription factor which regulates nonfermentable carbon utilization. Activator of gluconeogenetic genes. The chain is Transcription activator of gluconeogenesis BDBG_05438 from Blastomyces gilchristii (strain SLH14081) (Blastomyces dermatitidis).